Reading from the N-terminus, the 380-residue chain is Glucose-1-phosphate adenylyltransferase (380 aa).

Residues glycine 164, 179-180 (EK), and serine 190 each bind alpha-D-glucose 1-phosphate.

It belongs to the bacterial/plant glucose-1-phosphate adenylyltransferase family. In terms of assembly, homotetramer.

It catalyses the reaction alpha-D-glucose 1-phosphate + ATP + H(+) = ADP-alpha-D-glucose + diphosphate. It participates in glycan biosynthesis; glycogen biosynthesis. Its function is as follows. Involved in the biosynthesis of ADP-glucose, a building block required for the elongation reactions to produce glycogen. Catalyzes the reaction between ATP and alpha-D-glucose 1-phosphate (G1P) to produce pyrophosphate and ADP-Glc. The protein is Glucose-1-phosphate adenylyltransferase of Streptococcus sanguinis (strain SK36).